A 312-amino-acid polypeptide reads, in one-letter code: F-box protein At1g11270 (312 aa).

The 52-residue stretch at 29-80 (SVVKLLLPHDVVGLILERLPVESLLRFKCVSNQWKSTIESQCFQERQLIRRM) folds into the F-box domain.

In Arabidopsis thaliana (Mouse-ear cress), this protein is F-box protein At1g11270.